A 508-amino-acid chain; its full sequence is Adenosine deaminase (508 aa).

The first 18 residues, 1–18 (MFSQLVVWLLATSTVCLA), serve as a signal peptide directing secretion.

The protein belongs to the metallo-dependent hydrolases superfamily. Adenosine and AMP deaminases family. ADGF subfamily. It depends on Zn(2+) as a cofactor. In terms of tissue distribution, salivary gland (at protein level).

The protein localises to the secreted. The catalysed reaction is adenosine + H2O + H(+) = inosine + NH4(+). Catalyzes the deamination of adenosine to inosine. This chain is Adenosine deaminase, found in Lutzomyia longipalpis (Sand fly).